Here is a 1063-residue protein sequence, read N- to C-terminus: MADLNIVMNGDFFAGIEPWYPNGCEAFVVSSDPFSSEVMSADSSSGGYVVVTNRKETWQGLEQDITTRVASGMNYTVSTCVGVSGPFNESAEVLSTVRLEHEDSPTEYLCIGKTYASRDKWVDLEGTFSISNMPDRVVLYLEGPAPGKDLLIRSVTVRSSTSSDFQETEKNTDASNVFPLALNIIKNHDFSDGLYSWNTNGCDSFVVSSNDCNLESNAVVNNRSETWQGLEQDITDNVSPGFSYKVSASVSVSGPVLGSAQVLATLKLEHKSSATEFQLIGKTYASKDIWKTLEGTFEVSGRPDRVVFFLEGPPPGIDLLVKSVTIHCESDNQFERSREFCSAPESDNHIFLNSSFSDGLNHWSGRGCNLMLHESLADGKILPDSGTCFASASERTHKWSGIEQDITERVQRKLIYEASSVVRLSHSHHTVQATLYVQYLDQREEYIGISSVQGTHDDWVELKGKFLLNGSPARAVVYIEGPPPGIDVFVDHFAVKPAEKETPSGRPYIESHAFGMNIVSNSHLSDGTIEGWFPLGDCHLKVGDGSPRILPPLARDSLRKTQGYLSGRYVLATNRSGTWMGPAQTITDKVKLFVTYQVSAWVKIGSGGRTSPQDVNIALSVDGNWVNGGKVEVDDGDWHEVVGSFRIEKEAKEVMLHVQGPSPGVDLMVAGLQIFAVDRKARLSYLRGQADVVRKRNVCLKFSGLDPSELSGATVKIRQTRNSFPLGSCISRSNIDNEDFVDFFLNNFDWAVFGYELKWYWTEPEQGNFNYRDANEMIEFCERYNIKTRGHCIFWEVESAIQPWVQQLTGSKLEAAVENRVTDLLTRYNGKFRHYDVNNEMLHGSFYRDRLDSDARANMFKTAHELDPLATLFLNEYHIEDGFDSRSSPEKYIKLVHKLQKKGAPVGGIGIQGHITSPVGHIVRSALDKLSTLGLPIWFTELDVSSTNEHIRGDDLEVMLWEAFAHPAVEGVMLWGFWELFMSREHSHLVNADGEVNEAGKRFLEIKREWLSFVDGEIEDGGGLEFRGYHGSYTVEVVTSESKYVTNFVVDKGNSPVDVIIDL.

CBM-cenC domains follow at residues 5 to 146 (NIVM…GPAP), 183 to 313 (NIIK…LEGP), 348 to 482 (NHIF…IEGP), and 517 to 662 (NIVS…QGPS). Residues 711-1006 (SGATVKIRQT…NEAGKRFLEI (296 aa)) enclose the GH10 domain. Glu840 acts as the Proton donor in catalysis. Glu941 functions as the Nucleophile in the catalytic mechanism.

The protein belongs to the glycosyl hydrolase 10 (cellulase F) family.

It catalyses the reaction Endohydrolysis of (1-&gt;4)-beta-D-xylosidic linkages in xylans.. It functions in the pathway glycan degradation; xylan degradation. Its function is as follows. Binds to and hydrolyzes insoluble and soluble xylan substrates. The sequence is that of Endo-1,4-beta-xylanase 2 from Arabidopsis thaliana (Mouse-ear cress).